The following is a 163-amino-acid chain: MSNINLATLDISEHPNLPSSSAVLFEAKAKKKLSFEAIASAIGRNEVATAAIFYGQAKASAEDIVKLSEVLGIDRFYLESLLSGFPDRGKSVTFPPKDPLIYRLFEIVQNYGYAYKAVMNEKFGDGIMSAISFSTTVEKETDLDGNNWAVVTWRGKWLPYSRF.

Catalysis depends on residues arginine 103, glutamate 106, and serine 129.

Belongs to the cyanase family.

The catalysed reaction is cyanate + hydrogencarbonate + 3 H(+) = NH4(+) + 2 CO2. Its function is as follows. Catalyzes the reaction of cyanate with bicarbonate to produce ammonia and carbon dioxide. This chain is Cyanate hydratase, found in Paracoccidioides lutzii (strain ATCC MYA-826 / Pb01) (Paracoccidioides brasiliensis).